The following is a 93-amino-acid chain: Cell division protein FtsB (93 aa).

Topologically, residues 1 to 3 (MRL) are cytoplasmic. A helical transmembrane segment spans residues 4-21 (FILVLTLLFGWLQYTLWF). The Periplasmic portion of the chain corresponds to 22–93 (GKNGVSDYYT…FYRIVGEENQ (72 aa)). Positions 42–75 (VNTKLQARNSEMYAEIDDLKQGLDAIEERARHEL) form a coiled coil.

The protein belongs to the FtsB family. In terms of assembly, part of a complex composed of FtsB, FtsL and FtsQ.

The protein resides in the cell inner membrane. Functionally, essential cell division protein. May link together the upstream cell division proteins, which are predominantly cytoplasmic, with the downstream cell division proteins, which are predominantly periplasmic. This Vibrio vulnificus (strain YJ016) protein is Cell division protein FtsB.